A 324-amino-acid chain; its full sequence is MQDFLALTLQGEQPATREGKQANFSWRWLGEGLLECTPHAQYDKAVVLSAGVHGNETAPIELLSHLCTDLFAGRLKLAVRLLLVLGNPYAMRQGKRYVHDDVNRMFCGGYKNLPVTEESKRAEVLEQTVATFFQESSSQAKRYHYDLHTAIRASLLPTFALFPYQTHSYDADLTASLEAADLDALVYHNAVGKTFTHFTSENFKAASATLELGKALPFGQNDLSQFASIDEVIRNVVSEQALPVRNKPKIRVFQVSDSLIKKDEEFHMNLSAEAPNFSTFTKGEIIATQPSGNYVVEQDQVWILFPNPNVKIGLRAGLVLTETI.

His-53, Glu-56, and His-148 together coordinate Zn(2+). Residue Glu-211 is part of the active site.

This sequence belongs to the AspA/AstE family. Succinylglutamate desuccinylase subfamily. The cofactor is Zn(2+).

The catalysed reaction is N-succinyl-L-glutamate + H2O = L-glutamate + succinate. The protein operates within amino-acid degradation; L-arginine degradation via AST pathway; L-glutamate and succinate from L-arginine: step 5/5. In terms of biological role, transforms N(2)-succinylglutamate into succinate and glutamate. The chain is Succinylglutamate desuccinylase from Acinetobacter baumannii (strain SDF).